We begin with the raw amino-acid sequence, 198 residues long: MIPTVIETSGRGDRAFDIYSRLLRERIVFLGQEVRDENANLVVAQLLFLEAEDPEKDIYLYINSPGGSVSAGLGIFDTMNQIRPDVCTICIGLAASMGAFLLSAGAKGKRMSLPNSRIMIHQPLGGAQGQATDIEIQAKEILYLKALLNQHLANHTGKSLEEITADTERDFFMSAEESKEYGLIDQVINRRPSASDPI.

Catalysis depends on Ser96, which acts as the Nucleophile. His121 is a catalytic residue.

It belongs to the peptidase S14 family. In terms of assembly, fourteen ClpP subunits assemble into 2 heptameric rings which stack back to back to give a disk-like structure with a central cavity, resembling the structure of eukaryotic proteasomes.

It is found in the cytoplasm. It carries out the reaction Hydrolysis of proteins to small peptides in the presence of ATP and magnesium. alpha-casein is the usual test substrate. In the absence of ATP, only oligopeptides shorter than five residues are hydrolyzed (such as succinyl-Leu-Tyr-|-NHMec, and Leu-Tyr-Leu-|-Tyr-Trp, in which cleavage of the -Tyr-|-Leu- and -Tyr-|-Trp bonds also occurs).. Cleaves peptides in various proteins in a process that requires ATP hydrolysis. Has a chymotrypsin-like activity. Plays a major role in the degradation of misfolded proteins. The protein is ATP-dependent Clp protease proteolytic subunit 1 of Synechocystis sp. (strain ATCC 27184 / PCC 6803 / Kazusa).